Reading from the N-terminus, the 353-residue chain is Serine/threonine-protein kinase SRK2G (353 aa).

The Protein kinase domain occupies Tyr-4–Tyr-260. ATP contacts are provided by residues Leu-10–Ala-18 and Lys-33. Asp-123 serves as the catalytic Proton acceptor. The interval Arg-299–Ala-353 is disordered. Over residues Ala-302–Ser-313 the composition is skewed to polar residues. Positions Ala-315 to Glu-336 are enriched in acidic residues. Positions Tyr-337–Ala-353 are enriched in basic and acidic residues.

This sequence belongs to the protein kinase superfamily. Ser/Thr protein kinase family. As to expression, expressed in seedlings.

Its subcellular location is the nucleus. It catalyses the reaction L-seryl-[protein] + ATP = O-phospho-L-seryl-[protein] + ADP + H(+). The catalysed reaction is L-threonyl-[protein] + ATP = O-phospho-L-threonyl-[protein] + ADP + H(+). The sequence is that of Serine/threonine-protein kinase SRK2G (SRK2G) from Arabidopsis thaliana (Mouse-ear cress).